A 211-amino-acid polypeptide reads, in one-letter code: Uracil phosphoribosyltransferase (211 aa).

5-phospho-alpha-D-ribose 1-diphosphate-binding positions include arginine 78, arginine 103, and 130 to 138 (DPMLATGSS). Residues isoleucine 193 and 198–200 (GDA) each bind uracil. Position 199 (aspartate 199) interacts with 5-phospho-alpha-D-ribose 1-diphosphate.

Belongs to the UPRTase family. Requires Mg(2+) as cofactor.

The enzyme catalyses UMP + diphosphate = 5-phospho-alpha-D-ribose 1-diphosphate + uracil. It functions in the pathway pyrimidine metabolism; UMP biosynthesis via salvage pathway; UMP from uracil: step 1/1. With respect to regulation, allosterically activated by GTP. Its function is as follows. Catalyzes the conversion of uracil and 5-phospho-alpha-D-ribose 1-diphosphate (PRPP) to UMP and diphosphate. The protein is Uracil phosphoribosyltransferase of Acinetobacter baylyi (strain ATCC 33305 / BD413 / ADP1).